A 265-amino-acid polypeptide reads, in one-letter code: Small ribosomal subunit protein uS3 (265 aa).

A KH type-2 domain is found at 39–111 (IREFLNENFS…EVILNIIEVR (73 aa)). The tract at residues 224–250 (FEAGNQRRGQKRRPRNDQPVKDLNKEK) is disordered. A compositionally biased stretch (basic and acidic residues) spans 238 to 250 (RNDQPVKDLNKEK).

Belongs to the universal ribosomal protein uS3 family. As to quaternary structure, part of the 30S ribosomal subunit. Forms a tight complex with proteins S10 and S14.

Binds the lower part of the 30S subunit head. Binds mRNA in the 70S ribosome, positioning it for translation. The polypeptide is Small ribosomal subunit protein uS3 (Acholeplasma laidlawii).